The following is a 341-amino-acid chain: Foldase protein PrsA (341 aa).

Positions 1-22 (MKNIGRLAVTALIAVFIFSVTG) are cleaved as a signal peptide. A lipid anchor (N-palmitoyl cysteine) is attached at Cys23. A lipid anchor (S-diacylglycerol cysteine) is attached at Cys23. Residues 199–291 (PNKMHLAHIL…FGYHIIKCIK (93 aa)) form the PpiC domain.

The protein belongs to the PrsA family.

The protein localises to the cell membrane. The catalysed reaction is [protein]-peptidylproline (omega=180) = [protein]-peptidylproline (omega=0). Its function is as follows. Plays a major role in protein secretion by helping the post-translocational extracellular folding of several secreted proteins. The polypeptide is Foldase protein PrsA (Clostridium kluyveri (strain NBRC 12016)).